Here is a 34-residue protein sequence, read N- to C-terminus: Cycloamanide E proprotein (34 aa).

The propeptide occupies 1-10 (MSDINAARLP). Positions 11 to 17 (SFFFPVP) form a cross-link, cyclopeptide (Ser-Pro). Positions 18-34 (CISDDIEMVLTRGESLC) are excised as a propeptide.

It belongs to the MSDIN fungal toxin family. Processed by the macrocyclase-peptidase enzyme POPB to yield a cyclic decapeptide. POPB first removes 10 residues from the N-terminus. Conformational trapping of the remaining peptide forces the enzyme to release this intermediate rather than proceed to macrocyclization. The enzyme rebinds the remaining peptide in a different conformation and catalyzes macrocyclization of the N-terminal 7 residues.

Functionally, cyclic heptapeptide that belongs to the MSDIN-like toxin family responsible for a large number of food poisoning cases and deaths. Cycloaminide E is structurally related to other cycloamanides that are non-toxic to mammals but show immunosuppressive activity. The sequence is that of Cycloamanide E proprotein from Amanita phalloides (Death cap).